The following is an 880-amino-acid chain: Dynamin-like protein A (880 aa).

The segment at 1–124 (MSVFKKKDKS…QVELERKRRD (124 aa)) is disordered. Residues 8 to 20 (DKSDDKKKKHDEE) are compositionally biased toward basic and acidic residues. Positions 22–31 (PQGTFQPASQ) are enriched in polar residues. Positions 32-68 (STSNTNLNSLASSVNNGASVGSTNGSTPNNSNGSTPT) are enriched in low complexity. Positions 69–152 (YNHNNSAEEL…NEQVEISSLE (84 aa)) form a coiled coil. 2 stretches are compositionally biased toward basic and acidic residues: residues 77-94 (ELEKQKKEEDEKRKKSEL) and 103-124 (KKKEDEEKQRKEQVELERKRRD). A Dynamin-type G domain is found at 191–478 (AVSHPEIVFV…VWKSYQDTIP (288 aa)). The tract at residues 201-208 (GPRSSGKS) is G1 motif. Residue 201–208 (GPRSSGKS) coordinates GTP. A G2 motif region spans residues 227–240 (IVGVGGSNANGCSK). Positions 315-318 (DSPG) are G3 motif. GTP is bound by residues 315 to 319 (DSPGL) and 380 to 383 (TKFH). The G4 motif stretch occupies residues 380-383 (TKFH). The G5 motif stretch occupies residues 413–416 (LPNH). Positions 479-509 (RILKHLRSKRQTAEATLNELQKQSSSLDSTK) form a coiled coil. The span at 532–543 (TSEGNPSANGQT) shows a compositional bias: polar residues. Residues 532-551 (TSEGNPSANGQTLDEEKSQQ) are disordered. Residues 824-861 (SNEQLEQLFEVQATREQLKQEEKKQQQILEKYSQIDEQ) adopt a coiled-coil conformation.

This sequence belongs to the TRAFAC class dynamin-like GTPase superfamily. Dynamin/Fzo/YdjA family.

The protein localises to the cytoplasm. It is found in the cleavage furrow. The enzyme catalyses GTP + H2O = GDP + phosphate + H(+). Its function is as follows. Involved in cytokinesis. May hydrolyze GTP. The sequence is that of Dynamin-like protein A (dlpA) from Dictyostelium discoideum (Social amoeba).